The sequence spans 109 residues: UPF0060 membrane protein PA3275 (109 aa).

A run of 4 helical transmembrane segments spans residues 5–25 (FWFVLAAFCEIAGCYAFYLWL), 27–47 (LGKSALWVLPGLLSLTLFALL), 59–79 (AYAAYGGIYVAASLFWLAFVE), and 84–104 (LWSDWLGVALCVVGASVVLFG).

This sequence belongs to the UPF0060 family.

It localises to the cell inner membrane. This chain is UPF0060 membrane protein PA3275, found in Pseudomonas aeruginosa (strain ATCC 15692 / DSM 22644 / CIP 104116 / JCM 14847 / LMG 12228 / 1C / PRS 101 / PAO1).